The following is a 519-amino-acid chain: Exodeoxyribonuclease 7 large subunit (519 aa).

Residues 493 to 519 form a disordered region; sequence AISTGKSSNTNRKSAPAREPGKQGSLF. The span at 496–505 shows a compositional bias: polar residues; it reads TGKSSNTNRK.

The protein belongs to the XseA family. In terms of assembly, heterooligomer composed of large and small subunits.

It is found in the cytoplasm. The enzyme catalyses Exonucleolytic cleavage in either 5'- to 3'- or 3'- to 5'-direction to yield nucleoside 5'-phosphates.. Bidirectionally degrades single-stranded DNA into large acid-insoluble oligonucleotides, which are then degraded further into small acid-soluble oligonucleotides. This Chelativorans sp. (strain BNC1) protein is Exodeoxyribonuclease 7 large subunit.